Here is a 169-residue protein sequence, read N- to C-terminus: Thaumatin-like pathogenesis-related protein 2 (169 aa).

Positions 1–21 (MATSSAVLFFLLAVFAAGASA) are cleaved as a signal peptide.

This sequence belongs to the thaumatin family.

Its function is as follows. Associated with resistance against stem rust fungi. This chain is Thaumatin-like pathogenesis-related protein 2 (RASTL-2), found in Avena sativa (Oat).